Here is a 204-residue protein sequence, read N- to C-terminus: Large ribosomal subunit protein bL25 (204 aa).

Residues 1 to 20 are disordered; that stretch reads MSETYELKAETRDRVGKGSS.

It belongs to the bacterial ribosomal protein bL25 family. CTC subfamily. Part of the 50S ribosomal subunit; part of the 5S rRNA/L5/L18/L25 subcomplex. Contacts the 5S rRNA. Binds to the 5S rRNA independently of L5 and L18.

In terms of biological role, this is one of the proteins that binds to the 5S RNA in the ribosome where it forms part of the central protuberance. The polypeptide is Large ribosomal subunit protein bL25 (Rhizobium meliloti (strain 1021) (Ensifer meliloti)).